We begin with the raw amino-acid sequence, 513 residues long: Zinc finger CCCH-type with G patch domain-containing protein (513 aa).

The C3H1-type zinc finger occupies 155–178 (PCSYYLEGECRFDEAKCRFSHGAL). Composition is skewed to acidic residues over residues 252 to 261 (DQDEDDELSS) and 273 to 283 (SDEAESDMDDL). The tract at residues 252-283 (DQDEDDELSSEESTSSMRDASSDEAESDMDDL) is disordered. In terms of domain architecture, G-patch spans 312–358 (TRGIGSKLMEKMGYIHGTGLGSEGRGIVTPVSAQILPQGRSLDACME). Disordered regions lie at residues 411–430 (PGES…NNEL) and 477–513 (QVQM…MFEF). Residues 477 to 495 (QVQMQSHKQELATLQAQER) show a composition bias toward polar residues. A compositionally biased stretch (basic and acidic residues) spans 496–513 (SLSKEQQTRKSKNKMFEF).

It is found in the nucleus. Its function is as follows. Transcription repressor. The chain is Zinc finger CCCH-type with G patch domain-containing protein from Drosophila sechellia (Fruit fly).